A 147-amino-acid chain; its full sequence is MVEWTDKERSIISDIFSHMDYDDIGPKALSRCLVVYPWTQRYFSGFGNLYNAEGIMSNANVAAHGIKVLHGLDRGVKNMDNIAATYADLSTLHSEKLHVDPDNFKLLSDCITIVLAAKMGHAFTAETQGAFQKFLAVVVSALGKQYH.

A Globin domain is found at 3 to 147 (EWTDKERSII…VVSALGKQYH (145 aa)). Heme b is bound by residues His64 and His93.

Belongs to the globin family. As to quaternary structure, heterotetramer of two alpha chains and two beta chains. Red blood cells.

In terms of biological role, involved in oxygen transport from gills to the various peripheral tissues. This chain is Hemoglobin subunit beta (hbb), found in Trematomus hansoni (Striped rockcod).